The sequence spans 78 residues: Sec-independent protein translocase protein TatA (78 aa).

Residues 1-21 (MGSLSIWHWIVVLAVVLLLFG) form a helical membrane-spanning segment. Residues 43 to 78 (LAEDDEPAKTPAAPPEAPRPLPHQTSSAAEAEKKPV) form a disordered region. Residues 54 to 63 (AAPPEAPRPL) are compositionally biased toward pro residues.

It belongs to the TatA/E family. In terms of assembly, the Tat system comprises two distinct complexes: a TatABC complex, containing multiple copies of TatA, TatB and TatC subunits, and a separate TatA complex, containing only TatA subunits. Substrates initially bind to the TatABC complex, which probably triggers association of the separate TatA complex to form the active translocon.

It localises to the cell inner membrane. Its function is as follows. Part of the twin-arginine translocation (Tat) system that transports large folded proteins containing a characteristic twin-arginine motif in their signal peptide across membranes. TatA could form the protein-conducting channel of the Tat system. This is Sec-independent protein translocase protein TatA from Xanthobacter autotrophicus (strain ATCC BAA-1158 / Py2).